Reading from the N-terminus, the 481-residue chain is Hyaluronidase-4 (481 aa).

Residues 1–8 (MKVLSEGQ) lie on the Cytoplasmic side of the membrane. A helical membrane pass occupies residues 9–29 (LKLCVVQPVHLTSWLLIFFIL). Residues 30 to 453 (KSISCLKPAR…ADCREIKTAD (424 aa)) lie on the Extracellular side of the membrane. 5 disulfide bridges follow: Cys-59–Cys-351, Cys-223–Cys-237, Cys-376–Cys-387, Cys-381–Cys-435, and Cys-437–Cys-446. Residues Asn-86 and Asn-115 are each glycosylated (N-linked (GlcNAc...) asparagine). Glu-147 acts as the Proton donor in catalysis. The N-linked (GlcNAc...) (complex) asparagine glycan is linked to Asn-177. N-linked (GlcNAc...) asparagine glycosylation is present at Asn-343. A helical transmembrane segment spans residues 454-474 (GCSGVSPSPGSLMTLCLLLLA). Residues 475 to 481 (SYRSIQL) lie on the Cytoplasmic side of the membrane.

This sequence belongs to the glycosyl hydrolase 56 family. As to expression, detected in placenta and skeletal muscle.

Its subcellular location is the membrane. The enzyme catalyses Random hydrolysis of (1-&gt;4)-linkages between N-acetyl-beta-D-glucosamine and D-glucuronate residues in hyaluronate.. Its function is as follows. Endo-hyaluronidase that degrades hyaluronan to smaller oligosaccharide fragments. Also has chondroitin sulfate hydrolase activity, The best substrate being the galactosaminidic linkage in the sequence of a trisulfated tetrasaccharide. This chain is Hyaluronidase-4 (HYAL4), found in Homo sapiens (Human).